A 382-amino-acid polypeptide reads, in one-letter code: MKALHFGAGNIGRGFIGKLLADAGIELTFADVNQTVLDALNARHSYQVHVVGENEQVDTVSGVNAVSSIGDEVVDLIAEVDVVTTAVGPVALERIAPAIAKGLAQRKAQGTERPLNIIACENMVRGTTQLKGHVFNALAEEDKAWVEAHIGFVDSAVDRIVPPSASATHDPLEVTVETFSEWIVDKTQFKGALPTIPGMELTDNLMAFVERKLFTLNTGHAITAYLGKLAGHQTIRDAILDKKIRAVVQGAMEESGAVLIKRYAFDPQKHAAYIQKILGRFENPYLKDDVERVGRQPLRKLSAGDRLIKPLLGTLEYGLPHRNLVKGIAAAMHFRSEDDPQAQELAALIADKGPQAALAQISGLDAASDVVAEAVNDYNAEK.

Residue 3-14 coordinates NAD(+); that stretch reads ALHFGAGNIGRG.

The protein belongs to the mannitol dehydrogenase family.

It carries out the reaction D-mannitol 1-phosphate + NAD(+) = beta-D-fructose 6-phosphate + NADH + H(+). The polypeptide is Mannitol-1-phosphate 5-dehydrogenase (mtlD) (Klebsiella pneumoniae).